We begin with the raw amino-acid sequence, 201 residues long: Small ribosomal subunit protein uS4 (201 aa).

An S4 RNA-binding domain is found at 91-151 (SRLDNVVYRA…EKSQKMNWFE (61 aa)).

The protein belongs to the universal ribosomal protein uS4 family. In terms of assembly, part of the 30S ribosomal subunit. Contacts protein S5. The interaction surface between S4 and S5 is involved in control of translational fidelity.

One of the primary rRNA binding proteins, it binds directly to 16S rRNA where it nucleates assembly of the body of the 30S subunit. Its function is as follows. With S5 and S12 plays an important role in translational accuracy. This is Small ribosomal subunit protein uS4 from Corynebacterium efficiens (strain DSM 44549 / YS-314 / AJ 12310 / JCM 11189 / NBRC 100395).